The sequence spans 657 residues: Matrix metalloproteinase-15 (657 aa).

The signal sequence occupies residues 1 to 36; that stretch reads MGSDRSALGRPGCTGSCLSSRASLLPLLLVLLDCLG. The propeptide occupies 37–127; that stretch reads HGTASKDAEV…KANLRRRRKR (91 aa). The short motif at 105 to 112 is the Cysteine switch element; it reads PRCGVPDQ. Cys-107 is a binding site for Zn(2+). Over 128–614 the chain is Extracellular; it reads YTLTGKAWNN…MEEVVRTVNV (487 aa). Asn-146 carries an N-linked (GlcNAc...) asparagine glycan. His-255 provides a ligand contact to Zn(2+). Residue Glu-256 is part of the active site. His-259 and His-265 together coordinate Zn(2+). The disordered stretch occupies residues 295 to 365; sequence IQQLYGSPDG…ERPDQYGPNI (71 aa). Positions 328–337 are enriched in pro residues; the sequence is PRPPQPPHPG. 4 Hemopexin repeats span residues 363–411, 412–457, 459–507, and 508–555; these read PNIC…WRGL, PGNI…GTDI, YDRI…QGIP, and TSPK…FMGC. An intrachain disulfide couples Cys-366 to Cys-555. A glycan (N-linked (GlcNAc...) asparagine) is linked at Asn-414. The segment at 561 to 599 is disordered; that stretch reads PRSRWPDVARPPFNPNGGAEPEADGDSKEENAGDKDEGS. Basic and acidic residues predominate over residues 585-599; that stretch reads GDSKEENAGDKDEGS. The helical transmembrane segment at 615–635 threads the bilayer; the sequence is VMVLVPLLLLLCILGLAFALV. Residues 636–657 are Cytoplasmic-facing; the sequence is QMQRKGAPRMLLYCKRSLQEWV.

This sequence belongs to the peptidase M10A family. Requires Zn(2+) as cofactor. It depends on Ca(2+) as a cofactor. In terms of processing, the precursor is cleaved by a furin endopeptidase.

It localises to the membrane. Functionally, endopeptidase that degrades various components of the extracellular matrix. May activate progelatinase A. This is Matrix metalloproteinase-15 (Mmp15) from Mus musculus (Mouse).